The sequence spans 322 residues: Cysteine protease yopT1 (322 aa).

Residues Cys-139, His-258, and Asp-274 contribute to the active site.

This sequence belongs to the peptidase C58 family. In terms of assembly, interacts with human ARHA.

It is found in the secreted. Functionally, cysteine protease, which is translocated into infected cells and plays a central role in pathogenesis by cleaving the C-terminus end of the human small GTPase RhoA/ARHA, a regulator of cytoskeleton. Once cleaved, ARHA loses its lipid modification, and is released from the cell membrane, leading to the subsequent disruption of actin cytoskeleton of the host cell. The protein is Cysteine protease yopT1 (yopT1) of Yersinia enterocolitica.